The following is a 222-amino-acid chain: Histone H1.5 (222 aa).

The segment covering 1–16 (MSETAPAETTAPAPVE) has biased composition (low complexity). A disordered region spans residues 1-55 (MSETAPAETTAPAPVEKSPAKKKTKKAGAAKRKATGPPVSELITKAVSASKERGG). Ser2 carries the N-acetylserine modification. Position 2 is a phosphoserine (Ser2). At Lys17 the chain carries N6-acetyllysine. At Ser18 the chain carries Phosphoserine. Residues 20–34 (AKKKTKKAGAAKRKA) are compositionally biased toward basic residues. Lys26 carries the N6-methyllysine modification. Lys33 carries the post-translational modification N6-(beta-hydroxybutyryl)lysine; alternate. Lys33 carries the post-translational modification N6-succinyllysine; alternate. Thr35 is subject to Phosphothreonine. Positions 35–108 (TGPPVSELIT…GASGSFKLNK (74 aa)) constitute an H15 domain. At Lys45 the chain carries N6-acetyllysine. N6-(beta-hydroxybutyryl)lysine is present on Lys51. Arg53 bears the Citrulline mark. Residue Lys63 is modified to N6-(beta-hydroxybutyryl)lysine. Residue Lys74 is modified to N6-acetyllysine. 3 positions are modified to N6-(beta-hydroxybutyryl)lysine: Lys84, Lys89, and Lys105. The disordered stretch occupies residues 94–222 (QTKGTGASGS…KVKKAVSKKK (129 aa)). The segment covering 118 to 129 (KAKKTGAAKAKK) has biased composition (basic residues). Phosphothreonine occurs at positions 134 and 151. Over residues 136–157 (KKPKKTAGAKKTVKKTPKKAKK) the composition is skewed to basic residues. Position 164 is an N6-acetyllysine (Lys164). A compositionally biased stretch (basic residues) spans 165–183 (KVTKSPKKAKAAAKPKKAT). Phosphoserine occurs at positions 169 and 185. A compositionally biased stretch (basic residues) spans 190 to 222 (KAVKSKASKPKVTKPKAAKPKAAKVKKAVSKKK).

This sequence belongs to the histone H1/H5 family. In terms of assembly, interacts with MSX1. In terms of processing, H1 histones are progressively phosphorylated during the cell cycle, becoming maximally phosphorylated during late G2 phase and M phase, and being dephosphorylated sharply thereafter. Post-translationally, citrullination at Arg-53 (H1R54ci) by PADI4 takes place within the DNA-binding site of H1 and results in its displacement from chromatin and global chromatin decondensation, thereby promoting pluripotency and stem cell maintenance.

It is found in the nucleus. Its subcellular location is the chromosome. In terms of biological role, histone H1 protein binds to linker DNA between nucleosomes forming the macromolecular structure known as the chromatin fiber. Histones H1 are necessary for the condensation of nucleosome chains into higher-order structured fibers. Also acts as a regulator of individual gene transcription through chromatin remodeling, nucleosome spacing and DNA methylation. In Rattus norvegicus (Rat), this protein is Histone H1.5 (H1-5).